The sequence spans 355 residues: Putative transport protein PH1000 (355 aa).

A run of 8 helical transmembrane segments spans residues 34-54 (VTWIIIITLVALAIKTILPFF), 55-75 (SPLFFAFITAYALYPLHIKLK), 84-104 (AILLTLFLLLGALMILLILVY), 158-178 (FSVPKYLLQVIVYLTFVYFFL), 212-232 (VWLLLNIVKGILMTLGFLIFK), 240-260 (ILAGLLTVLFSFIPLFEGWMI), 274-294 (IIAGIGLAVYGFTLVSPLPDF), and 310-330 (VLVLIGMIGGTWGLGLKGLII).

It belongs to the autoinducer-2 exporter (AI-2E) (TC 2.A.86) family.

It localises to the cell membrane. This Pyrococcus horikoshii (strain ATCC 700860 / DSM 12428 / JCM 9974 / NBRC 100139 / OT-3) protein is Putative transport protein PH1000.